Here is a 374-residue protein sequence, read N- to C-terminus: UDP-N-acetylglucosamine--N-acetylmuramyl-(pentapeptide) pyrophosphoryl-undecaprenol N-acetylglucosamine transferase (374 aa).

UDP-N-acetyl-alpha-D-glucosamine is bound by residues 13–15 (TGG), asparagine 124, arginine 165, serine 193, and glutamine 294.

The protein belongs to the glycosyltransferase 28 family. MurG subfamily.

It localises to the cell inner membrane. The enzyme catalyses di-trans,octa-cis-undecaprenyl diphospho-N-acetyl-alpha-D-muramoyl-L-alanyl-D-glutamyl-meso-2,6-diaminopimeloyl-D-alanyl-D-alanine + UDP-N-acetyl-alpha-D-glucosamine = di-trans,octa-cis-undecaprenyl diphospho-[N-acetyl-alpha-D-glucosaminyl-(1-&gt;4)]-N-acetyl-alpha-D-muramoyl-L-alanyl-D-glutamyl-meso-2,6-diaminopimeloyl-D-alanyl-D-alanine + UDP + H(+). Its pathway is cell wall biogenesis; peptidoglycan biosynthesis. Its function is as follows. Cell wall formation. Catalyzes the transfer of a GlcNAc subunit on undecaprenyl-pyrophosphoryl-MurNAc-pentapeptide (lipid intermediate I) to form undecaprenyl-pyrophosphoryl-MurNAc-(pentapeptide)GlcNAc (lipid intermediate II). The chain is UDP-N-acetylglucosamine--N-acetylmuramyl-(pentapeptide) pyrophosphoryl-undecaprenol N-acetylglucosamine transferase from Rhizobium leguminosarum bv. trifolii (strain WSM2304).